Consider the following 485-residue polypeptide: NADH-quinone oxidoreductase subunit N (485 aa).

The next 14 helical transmembrane spans lie at 8–28, 35–55, 71–91, 105–125, 127–147, 159–179, 203–223, 235–255, 271–291, 297–317, 326–346, 373–393, 408–430, and 455–475; these read LIAL…MLSI, FLNA…LWFV, GFAM…CTFA, FYLL…ANHL, ALFL…GYAF, YTIL…LVYA, LLAG…LAPF, PAPV…GVVM, VVLG…ALSQ, LLGY…IALQ, VGVY…VVSL, AAVM…LGFI, WWLV…RVAV, and IVVL…QPLI.

Belongs to the complex I subunit 2 family. In terms of assembly, NDH-1 is composed of 13 different subunits. Subunits NuoA, H, J, K, L, M, N constitute the membrane sector of the complex.

The protein resides in the cell inner membrane. It carries out the reaction a quinone + NADH + 5 H(+)(in) = a quinol + NAD(+) + 4 H(+)(out). Its function is as follows. NDH-1 shuttles electrons from NADH, via FMN and iron-sulfur (Fe-S) centers, to quinones in the respiratory chain. The immediate electron acceptor for the enzyme in this species is believed to be ubiquinone. Couples the redox reaction to proton translocation (for every two electrons transferred, four hydrogen ions are translocated across the cytoplasmic membrane), and thus conserves the redox energy in a proton gradient. The protein is NADH-quinone oxidoreductase subunit N of Salmonella paratyphi C (strain RKS4594).